A 673-amino-acid polypeptide reads, in one-letter code: Estrogen receptor beta (673 aa).

Residues 1 to 181 (MASSPGLDPH…SAVGKADMHF (181 aa)) are modulating. NR C4-type zinc fingers lie at residues 182–202 (CAVC…CEGC) and 218–242 (CPAT…LRKC). A DNA-binding region (nuclear receptor) is located at residues 182–247 (CAVCHDYASG…RLRKCYEVGM (66 aa)). In terms of domain architecture, NR LBD spans 316-552 (SPEEFISRIM…DLLLEMLDAN (237 aa)). The disordered stretch occupies residues 553 to 602 (TSSGGSQPSSSPSSETYSDQHQYPQPPSHLHPGSEQTTADHAIVPPLGPT). The segment covering 554-566 (SSGGSQPSSSPSS) has biased composition (low complexity).

It belongs to the nuclear hormone receptor family. NR3 subfamily. In terms of assembly, binds DNA as a homodimer. Can form a heterodimer with ER-alpha. In terms of tissue distribution, abundant in the liver and testes, less abundant in the ovary and barely detectable in the muscle.

It localises to the nucleus. In terms of biological role, binds estrogens with an affinity similar to that of ER-alpha, and activates expression of reporter genes containing estrogen response elements (ERE) in an estrogen-dependent manner. This chain is Estrogen receptor beta (esr2), found in Micropogonias undulatus (Atlantic croaker).